Reading from the N-terminus, the 207-residue chain is Ribosomal RNA small subunit methyltransferase G (207 aa).

S-adenosyl-L-methionine-binding positions include G76, Q81, 127–128 (VE), and R141.

It belongs to the methyltransferase superfamily. RNA methyltransferase RsmG family.

It localises to the cytoplasm. The catalysed reaction is guanosine(527) in 16S rRNA + S-adenosyl-L-methionine = N(7)-methylguanosine(527) in 16S rRNA + S-adenosyl-L-homocysteine. Specifically methylates the N7 position of guanine in position 527 of 16S rRNA. This is Ribosomal RNA small subunit methyltransferase G from Neisseria meningitidis serogroup C / serotype 2a (strain ATCC 700532 / DSM 15464 / FAM18).